Consider the following 325-residue polypeptide: tRNA(Ile)-lysidine synthase (325 aa).

Ser-35–Ser-40 provides a ligand contact to ATP.

This sequence belongs to the tRNA(Ile)-lysidine synthase family.

The protein localises to the cytoplasm. The catalysed reaction is cytidine(34) in tRNA(Ile2) + L-lysine + ATP = lysidine(34) in tRNA(Ile2) + AMP + diphosphate + H(+). In terms of biological role, ligates lysine onto the cytidine present at position 34 of the AUA codon-specific tRNA(Ile) that contains the anticodon CAU, in an ATP-dependent manner. Cytidine is converted to lysidine, thus changing the amino acid specificity of the tRNA from methionine to isoleucine. The chain is tRNA(Ile)-lysidine synthase from Gloeobacter violaceus (strain ATCC 29082 / PCC 7421).